The sequence spans 224 residues: ATP phosphoribosyltransferase (224 aa).

This sequence belongs to the ATP phosphoribosyltransferase family. Short subfamily. As to quaternary structure, heteromultimer composed of HisG and HisZ subunits.

The protein localises to the cytoplasm. The enzyme catalyses 1-(5-phospho-beta-D-ribosyl)-ATP + diphosphate = 5-phospho-alpha-D-ribose 1-diphosphate + ATP. It functions in the pathway amino-acid biosynthesis; L-histidine biosynthesis; L-histidine from 5-phospho-alpha-D-ribose 1-diphosphate: step 1/9. Functionally, catalyzes the condensation of ATP and 5-phosphoribose 1-diphosphate to form N'-(5'-phosphoribosyl)-ATP (PR-ATP). Has a crucial role in the pathway because the rate of histidine biosynthesis seems to be controlled primarily by regulation of HisG enzymatic activity. The polypeptide is ATP phosphoribosyltransferase (Cupriavidus taiwanensis (strain DSM 17343 / BCRC 17206 / CCUG 44338 / CIP 107171 / LMG 19424 / R1) (Ralstonia taiwanensis (strain LMG 19424))).